A 324-amino-acid chain; its full sequence is Acetyl-coenzyme A carboxylase carboxyl transferase subunit alpha (324 aa).

A CoA carboxyltransferase C-terminal domain is found at 37–291 (ILEEKLENLE…DLMIQKTFQQ (255 aa)).

Belongs to the AccA family. Acetyl-CoA carboxylase is a heterohexamer composed of biotin carboxyl carrier protein (AccB), biotin carboxylase (AccC) and two subunits each of ACCase subunit alpha (AccA) and ACCase subunit beta (AccD).

It is found in the cytoplasm. The enzyme catalyses N(6)-carboxybiotinyl-L-lysyl-[protein] + acetyl-CoA = N(6)-biotinyl-L-lysyl-[protein] + malonyl-CoA. Its pathway is lipid metabolism; malonyl-CoA biosynthesis; malonyl-CoA from acetyl-CoA: step 1/1. Component of the acetyl coenzyme A carboxylase (ACC) complex. First, biotin carboxylase catalyzes the carboxylation of biotin on its carrier protein (BCCP) and then the CO(2) group is transferred by the carboxyltransferase to acetyl-CoA to form malonyl-CoA. In Bacillus cereus (strain ATCC 14579 / DSM 31 / CCUG 7414 / JCM 2152 / NBRC 15305 / NCIMB 9373 / NCTC 2599 / NRRL B-3711), this protein is Acetyl-coenzyme A carboxylase carboxyl transferase subunit alpha.